The following is a 360-amino-acid chain: Aminomethyltransferase (360 aa).

It belongs to the GcvT family. As to quaternary structure, the glycine cleavage system is composed of four proteins: P, T, L and H.

The enzyme catalyses N(6)-[(R)-S(8)-aminomethyldihydrolipoyl]-L-lysyl-[protein] + (6S)-5,6,7,8-tetrahydrofolate = N(6)-[(R)-dihydrolipoyl]-L-lysyl-[protein] + (6R)-5,10-methylene-5,6,7,8-tetrahydrofolate + NH4(+). Functionally, the glycine cleavage system catalyzes the degradation of glycine. The sequence is that of Aminomethyltransferase from Pseudomonas putida (strain ATCC 47054 / DSM 6125 / CFBP 8728 / NCIMB 11950 / KT2440).